Reading from the N-terminus, the 330-residue chain is MAILAFQKPENVLMMETSDSIAKFEFKPLEPGYGITIGNALRRILLSSLEGFAITAIKIEGVEHEFATIPGVLEDVTNIILNLKQVRFKQIVPNADVEKATIVISNSEVFRAGDLNAQLSNFEVLNSNLVICHLDKSATLTMEFSINKGRGYVSAEENRAEHNELSTIAIDSIYTPIRNVKYAVENFRVEQKTDYEKLLMEVTTDGSIRPVDALREAAQILISHFSLFAENKIAIEYVDIVDTDEFDEDSLHMRQLLKSKLSGLDLSVRALNCLNAAGVDTLGDLVSLSRSDLMKIRNFGKKSLTELDELLATLNLSFGMDISKYKLDKD.

The interval Met-1–Lys-232 is alpha N-terminal domain (alpha-NTD). An alpha C-terminal domain (alpha-CTD) region spans residues Glu-248–Asp-330.

The protein belongs to the RNA polymerase alpha chain family. Homodimer. The RNAP catalytic core consists of 2 alpha, 1 beta, 1 beta' and 1 omega subunit. When a sigma factor is associated with the core the holoenzyme is formed, which can initiate transcription.

It carries out the reaction RNA(n) + a ribonucleoside 5'-triphosphate = RNA(n+1) + diphosphate. Its function is as follows. DNA-dependent RNA polymerase catalyzes the transcription of DNA into RNA using the four ribonucleoside triphosphates as substrates. The protein is DNA-directed RNA polymerase subunit alpha of Porphyromonas gingivalis (strain ATCC BAA-308 / W83).